Consider the following 277-residue polypeptide: PTS system sorbose-specific EIIC component (277 aa).

5 helical membrane-spanning segments follow: residues 1–21 (MAIS…VGMG), 92–112 (IQKG…LTVL), 133–153 (FTAI…RVSI), 177–197 (VITG…YAMI), and 219–239 (YLKL…IVYV). A PTS EIIC type-4 domain is found at 3-237 (ISTIQIILIF…GAVGLIFAIV (235 aa)).

It is found in the cell membrane. Its function is as follows. The phosphoenolpyruvate-dependent sugar phosphotransferase system (PTS), a major carbohydrate active transport system, catalyzes the phosphorylation of incoming sugar substrates concomitant with their translocation across the cell membrane. The enzyme II SorABCD PTS system is involved in L-sorbose transport. In Lacticaseibacillus casei (Lactobacillus casei), this protein is PTS system sorbose-specific EIIC component.